The following is a 131-amino-acid chain: Protein FAM107B (131 aa).

Ala2 bears the N-acetylalanine mark. Residues 39-79 (MNQKRGLAPQNKPELQKVMEKRRRDQVIKQKEEEAQKKKSD) are disordered. The residue at position 50 (Lys50) is an N6-acetyllysine. Basic and acidic residues predominate over residues 52–79 (ELQKVMEKRRRDQVIKQKEEEAQKKKSD). A coiled-coil region spans residues 61–112 (RRDQVIKQKEEEAQKKKSDLEIELLKRQQKLEQLELEKQKLQEEQENAPEFV).

This sequence belongs to the FAM107 family. Expressed in the hippocampus and hypothalamus. Expressed in the pontine nuclei and reticulotegmental nucleus. Expressed in Purkinje cell and nuclear layers of the cerebelum. Expressed in the choroid plexus. Expressed in hippocampal granule neurons of the dente gyrus.

This Mus musculus (Mouse) protein is Protein FAM107B.